Consider the following 615-residue polypeptide: DNA mismatch repair protein MutL (615 aa).

The interval 363–397 (FAEPAAREPVAPRYSPAPASGSRPAAPWPNAQPGY) is disordered. Low complexity predominate over residues 364–387 (AEPAAREPVAPRYSPAPASGSRPA).

It belongs to the DNA mismatch repair MutL/HexB family.

This protein is involved in the repair of mismatches in DNA. It is required for dam-dependent methyl-directed DNA mismatch repair. May act as a 'molecular matchmaker', a protein that promotes the formation of a stable complex between two or more DNA-binding proteins in an ATP-dependent manner without itself being part of a final effector complex. This is DNA mismatch repair protein MutL from Shigella flexneri.